The primary structure comprises 359 residues: MDSINNKSIRVAVIGASGYGGIQSIRLLKEHPDFEISFLGGYKTAGLKWNDLCPFLPLENDPTINAVDLSEITDKSDIVLLSLPNGISSQLTPKLIKEKVRVVDLSADYRYRSLEEWKSIYSVESSKHSRKDELLCSQAVYGIPEWNSIEISKAKIVACPGCFPTASLLPLMPFLKQGIIETDGIIIDSKSGTSGGGRVPKEHLLLAESSESVEPYSVVGHRHTSEIEQELSNLSGSNIQIQFTPHLVPMVRGLLSTVYARLRDPCLTAEDCKTVLETVYRSCPSVEIQPVGVYPKTKWVRFTNKALISVQVDQRNGRVILMSAIDNLIKGQAGQAIQSLNLMSGLPTCKGLPLIGYYP.

Cys162 is an active-site residue.

The protein belongs to the NAGSA dehydrogenase family. Type 1 subfamily.

It localises to the cytoplasm. It catalyses the reaction N-acetyl-L-glutamate 5-semialdehyde + phosphate + NADP(+) = N-acetyl-L-glutamyl 5-phosphate + NADPH + H(+). It participates in amino-acid biosynthesis; L-arginine biosynthesis; N(2)-acetyl-L-ornithine from L-glutamate: step 3/4. In terms of biological role, catalyzes the NADPH-dependent reduction of N-acetyl-5-glutamyl phosphate to yield N-acetyl-L-glutamate 5-semialdehyde. In Prochlorococcus marinus (strain SARG / CCMP1375 / SS120), this protein is N-acetyl-gamma-glutamyl-phosphate reductase.